Reading from the N-terminus, the 343-residue chain is Heat-inducible transcription repressor HrcA (343 aa).

This sequence belongs to the HrcA family.

Functionally, negative regulator of class I heat shock genes (grpE-dnaK-dnaJ and groELS operons). Prevents heat-shock induction of these operons. This is Heat-inducible transcription repressor HrcA from Mycobacterium avium (strain 104).